We begin with the raw amino-acid sequence, 272 residues long: Insulin-like growth factor-binding protein 1 (272 aa).

A signal peptide spans 1-25; sequence MPEFLTVVSWPFLILLSFQIGVAAG. An IGFBP N-terminal domain is found at 28–109; sequence QPWHCAPCTA…TRGQGACVPE (82 aa). 6 disulfides stabilise this stretch: Cys-32–Cys-59, Cys-35–Cys-61, Cys-43–Cys-62, Cys-50–Cys-65, Cys-73–Cys-86, and Cys-80–Cys-106. A phosphoserine mark is found at Ser-139, Ser-157, and Ser-169. Position 170 is a phosphothreonine (Thr-170). Tyr-171 carries the phosphotyrosine modification. The Thyroglobulin type-1 domain occupies 186 to 264; sequence KEPCQRELYK…SLETRGDPNC (79 aa). Intrachain disulfides connect Cys-189–Cys-219, Cys-230–Cys-241, and Cys-243–Cys-264. Ser-255 is modified (phosphoserine). Residues 259-261 carry the Cell attachment site motif; the sequence is RGD.

As to quaternary structure, binds equally well IGF1 and IGF2. Interacts with integrin ITGA5:ITGB1. Interacts with VHL; this interaction inhibits HIF1A degradation.

The protein localises to the secreted. Functionally, multifunctional protein that plays a critical role in regulating the availability of IGFs such as IGF1 and IGF2 to their receptors and thereby regulates IGF-mediated cellular processes including cell migration, proliferation, differentiation or apoptosis in a cell-type specific manner. Also plays a positive role in cell migration by interacting with integrin ITGA5:ITGB1 through its RGD motif. Mechanistically, binding to integrins leads to activation of focal adhesion kinase/PTK2 and stimulation of the mitogen-activated protein kinase (MAPK) pathway. Regulates cardiomyocyte apoptosis by suppressing HIF-1alpha/HIF1A ubiquitination and subsequent degradation. The polypeptide is Insulin-like growth factor-binding protein 1 (Igfbp1) (Mus musculus (Mouse)).